The chain runs to 182 residues: Large ribosomal subunit protein uL5 (182 aa).

The protein belongs to the universal ribosomal protein uL5 family. Part of the 50S ribosomal subunit; part of the 5S rRNA/L5/L18/L25 subcomplex. Contacts the 5S rRNA and the P site tRNA. Forms a bridge to the 30S subunit in the 70S ribosome.

Its function is as follows. This is one of the proteins that bind and probably mediate the attachment of the 5S RNA into the large ribosomal subunit, where it forms part of the central protuberance. In the 70S ribosome it contacts protein S13 of the 30S subunit (bridge B1b), connecting the 2 subunits; this bridge is implicated in subunit movement. Contacts the P site tRNA; the 5S rRNA and some of its associated proteins might help stabilize positioning of ribosome-bound tRNAs. This chain is Large ribosomal subunit protein uL5, found in Coxiella burnetii (strain CbuK_Q154) (Coxiella burnetii (strain Q154)).